Here is an 87-residue protein sequence, read N- to C-terminus: CRISPR-associated endoribonuclease Cas2 (87 aa).

A Mg(2+)-binding site is contributed by D8.

Belongs to the CRISPR-associated endoribonuclease Cas2 protein family. Homodimer, forms a heterotetramer with a Cas1 homodimer. The cofactor is Mg(2+).

Its function is as follows. CRISPR (clustered regularly interspaced short palindromic repeat), is an adaptive immune system that provides protection against mobile genetic elements (viruses, transposable elements and conjugative plasmids). CRISPR clusters contain sequences complementary to antecedent mobile elements and target invading nucleic acids. CRISPR clusters are transcribed and processed into CRISPR RNA (crRNA). Functions as a ssRNA-specific endoribonuclease. Involved in the integration of spacer DNA into the CRISPR cassette. This chain is CRISPR-associated endoribonuclease Cas2, found in Methanosarcina acetivorans (strain ATCC 35395 / DSM 2834 / JCM 12185 / C2A).